A 600-amino-acid polypeptide reads, in one-letter code: Proline--tRNA ligase (600 aa).

Belongs to the class-II aminoacyl-tRNA synthetase family. ProS type 1 subfamily. Homodimer.

The protein resides in the cytoplasm. It catalyses the reaction tRNA(Pro) + L-proline + ATP = L-prolyl-tRNA(Pro) + AMP + diphosphate. Functionally, catalyzes the attachment of proline to tRNA(Pro) in a two-step reaction: proline is first activated by ATP to form Pro-AMP and then transferred to the acceptor end of tRNA(Pro). As ProRS can inadvertently accommodate and process non-cognate amino acids such as alanine and cysteine, to avoid such errors it has two additional distinct editing activities against alanine. One activity is designated as 'pretransfer' editing and involves the tRNA(Pro)-independent hydrolysis of activated Ala-AMP. The other activity is designated 'posttransfer' editing and involves deacylation of mischarged Ala-tRNA(Pro). The misacylated Cys-tRNA(Pro) is not edited by ProRS. This chain is Proline--tRNA ligase, found in Synechococcus elongatus (strain ATCC 33912 / PCC 7942 / FACHB-805) (Anacystis nidulans R2).